A 131-amino-acid chain; its full sequence is Small ribosomal subunit protein uS8 (131 aa).

The protein belongs to the universal ribosomal protein uS8 family. As to quaternary structure, part of the 30S ribosomal subunit. Contacts proteins S5 and S12.

One of the primary rRNA binding proteins, it binds directly to 16S rRNA central domain where it helps coordinate assembly of the platform of the 30S subunit. This Clostridium novyi (strain NT) protein is Small ribosomal subunit protein uS8.